An 847-amino-acid chain; its full sequence is Leucine--tRNA ligase (847 aa).

Residues 41-51 (PYPSGRIHMGH) carry the 'HIGH' region motif. Residues 619-623 (KMSKS) carry the 'KMSKS' region motif. Lysine 622 serves as a coordination point for ATP.

The protein belongs to the class-I aminoacyl-tRNA synthetase family.

It localises to the cytoplasm. The enzyme catalyses tRNA(Leu) + L-leucine + ATP = L-leucyl-tRNA(Leu) + AMP + diphosphate. This chain is Leucine--tRNA ligase, found in Cereibacter sphaeroides (strain ATCC 17029 / ATH 2.4.9) (Rhodobacter sphaeroides).